Consider the following 626-residue polypeptide: Procollagen galactosyltransferase 2 (626 aa).

The first 27 residues, 1–27 (MAARPAATLAWSLLLLSSALLREGCRA), serve as a signal peptide directing secretion. Residues N97, N185, N382, and N580 are each glycosylated (N-linked (GlcNAc...) asparagine). Positions 604–626 (NAKNTEALPPPTSLDTVPSRDEL) are disordered. The Prevents secretion from ER signature appears at 623–626 (RDEL).

It belongs to the glycosyltransferase 25 family. In terms of tissue distribution, expressed in brain and skeletal muscle.

The protein localises to the endoplasmic reticulum lumen. The enzyme catalyses (5R)-5-hydroxy-L-lysyl-[collagen] + UDP-alpha-D-galactose = (5R)-5-O-(beta-D-galactosyl)-5-hydroxy-L-lysyl-[collagen] + UDP + H(+). Functionally, beta-galactosyltransferase that transfers beta-galactose to hydroxylysine residues of collagen. The chain is Procollagen galactosyltransferase 2 (COLGALT2) from Homo sapiens (Human).